Reading from the N-terminus, the 77-residue chain is Large ribosomal subunit protein eL14 (77 aa).

It belongs to the eukaryotic ribosomal protein eL14 family.

In Methanococcus vannielii (strain ATCC 35089 / DSM 1224 / JCM 13029 / OCM 148 / SB), this protein is Large ribosomal subunit protein eL14.